An 864-amino-acid polypeptide reads, in one-letter code: Mitochondrial 15S rRNA processing factor CCM1 (864 aa).

A mitochondrion-targeting transit peptide spans 1–76; that stretch reads MYMARCGPKN…REFSNTLKER (76 aa). PPR repeat units follow at residues 319-353 and 356-390; these read NKQN…STKH and DICT…NIKP.

This sequence belongs to the CCM1 family. In terms of assembly, binds to mitochondrial small subunit 15S rRNA.

Its subcellular location is the mitochondrion. Its function is as follows. Regulates mitochondrial small subunit maturation by controlling 15S rRNA 5'-end processing. Localizes to the 5' precursor of the 15S rRNA in a position that is subsequently occupied by mS47 in the mature yeast mtSSU. Uses structure and sequence-specific RNA recognition, binding to a single-stranded region of the precursor and specifically recognizing bases -6 to -1. The exchange of Ccm1 for mS47 is coupled to the irreversible removal of precursor rRNA that is accompanied by conformational changes of the mitoribosomal proteins uS5m and mS26. These conformational changes signal completion of 5'-end rRNA processing through protection of the mature 5'-end of the 15S rRNA and stabilization of mS47. The removal of the 5' precursor together with the dissociation of Ccm1 may be catalyzed by the 5'-3' exoribonuclease Pet127. Involved in the specific removal of group I introns in mitochondrial encoded transcripts. The protein is Mitochondrial 15S rRNA processing factor CCM1 (CCM1) of Saccharomyces cerevisiae (strain JAY291) (Baker's yeast).